The chain runs to 264 residues: Glutamate racemase (264 aa).

Substrate-binding positions include 10–11 (DS) and 42–43 (YG). Cys-73 functions as the Proton donor/acceptor in the catalytic mechanism. 74 to 75 (NT) provides a ligand contact to substrate. Cys-183 (proton donor/acceptor) is an active-site residue. Position 184–185 (184–185 (TH)) interacts with substrate.

Belongs to the aspartate/glutamate racemases family.

The catalysed reaction is L-glutamate = D-glutamate. Its pathway is cell wall biogenesis; peptidoglycan biosynthesis. Functionally, provides the (R)-glutamate required for cell wall biosynthesis. This Streptococcus suis (strain 98HAH33) protein is Glutamate racemase.